A 248-amino-acid polypeptide reads, in one-letter code: UDP-2,3-diacylglucosamine hydrolase (248 aa).

Mn(2+) contacts are provided by D7, H9, D40, N78, and H113. 78–79 (NR) is a binding site for substrate. The substrate site is built by D121, S159, T163, K166, and H194. Mn(2+) contacts are provided by H194 and H196.

Belongs to the LpxH family. It depends on Mn(2+) as a cofactor.

It localises to the cell inner membrane. The enzyme catalyses UDP-2-N,3-O-bis[(3R)-3-hydroxytetradecanoyl]-alpha-D-glucosamine + H2O = 2-N,3-O-bis[(3R)-3-hydroxytetradecanoyl]-alpha-D-glucosaminyl 1-phosphate + UMP + 2 H(+). It functions in the pathway glycolipid biosynthesis; lipid IV(A) biosynthesis; lipid IV(A) from (3R)-3-hydroxytetradecanoyl-[acyl-carrier-protein] and UDP-N-acetyl-alpha-D-glucosamine: step 4/6. Functionally, hydrolyzes the pyrophosphate bond of UDP-2,3-diacylglucosamine to yield 2,3-diacylglucosamine 1-phosphate (lipid X) and UMP by catalyzing the attack of water at the alpha-P atom. Involved in the biosynthesis of lipid A, a phosphorylated glycolipid that anchors the lipopolysaccharide to the outer membrane of the cell. The chain is UDP-2,3-diacylglucosamine hydrolase from Pseudomonas savastanoi pv. phaseolicola (strain 1448A / Race 6) (Pseudomonas syringae pv. phaseolicola (strain 1448A / Race 6)).